The chain runs to 357 residues: Protein-glutamate methylesterase/protein-glutamine glutaminase 1 (357 aa).

The Response regulatory domain maps to 7 to 124; that stretch reads KVLCVDDSAL…REGLLDYTQT (118 aa). D58 is modified (4-aspartylphosphate). A CheB-type methylesterase domain is found at 158-350; sequence LLSTEKLIIV…QRVMAHLATF (193 aa). Catalysis depends on residues S170, H196, and D292.

The protein belongs to the CheB family. Phosphorylated by CheA. Phosphorylation of the N-terminal regulatory domain activates the methylesterase activity.

The protein resides in the cytoplasm. The catalysed reaction is [protein]-L-glutamate 5-O-methyl ester + H2O = L-glutamyl-[protein] + methanol + H(+). It catalyses the reaction L-glutaminyl-[protein] + H2O = L-glutamyl-[protein] + NH4(+). Its function is as follows. Involved in chemotaxis. Part of a chemotaxis signal transduction system that modulates chemotaxis in response to various stimuli. Catalyzes the demethylation of specific methylglutamate residues introduced into the chemoreceptors (methyl-accepting chemotaxis proteins or MCP) by CheR. Also mediates the irreversible deamidation of specific glutamine residues to glutamic acid. The sequence is that of Protein-glutamate methylesterase/protein-glutamine glutaminase 1 from Cupriavidus metallidurans (strain ATCC 43123 / DSM 2839 / NBRC 102507 / CH34) (Ralstonia metallidurans).